The following is a 350-amino-acid chain: tRNA uridine(34) hydroxylase (350 aa).

Positions 146–240 constitute a Rhodanese domain; that stretch reads DDPDALFIDM…YARKAREQGL (95 aa). Cysteine 200 serves as the catalytic Cysteine persulfide intermediate.

The protein belongs to the TrhO family.

It catalyses the reaction uridine(34) in tRNA + AH2 + O2 = 5-hydroxyuridine(34) in tRNA + A + H2O. Its function is as follows. Catalyzes oxygen-dependent 5-hydroxyuridine (ho5U) modification at position 34 in tRNAs. The sequence is that of tRNA uridine(34) hydroxylase from Shigella dysenteriae serotype 1 (strain Sd197).